A 103-amino-acid chain; its full sequence is Pyrimidine/purine nucleoside phosphorylase (103 aa).

It belongs to the nucleoside phosphorylase PpnP family.

The catalysed reaction is a purine D-ribonucleoside + phosphate = a purine nucleobase + alpha-D-ribose 1-phosphate. The enzyme catalyses adenosine + phosphate = alpha-D-ribose 1-phosphate + adenine. It catalyses the reaction cytidine + phosphate = cytosine + alpha-D-ribose 1-phosphate. It carries out the reaction guanosine + phosphate = alpha-D-ribose 1-phosphate + guanine. The catalysed reaction is inosine + phosphate = alpha-D-ribose 1-phosphate + hypoxanthine. The enzyme catalyses thymidine + phosphate = 2-deoxy-alpha-D-ribose 1-phosphate + thymine. It catalyses the reaction uridine + phosphate = alpha-D-ribose 1-phosphate + uracil. It carries out the reaction xanthosine + phosphate = alpha-D-ribose 1-phosphate + xanthine. Its function is as follows. Catalyzes the phosphorolysis of diverse nucleosides, yielding D-ribose 1-phosphate and the respective free bases. Can use uridine, adenosine, guanosine, cytidine, thymidine, inosine and xanthosine as substrates. Also catalyzes the reverse reactions. This Shewanella baltica (strain OS195) protein is Pyrimidine/purine nucleoside phosphorylase.